We begin with the raw amino-acid sequence, 204 residues long: Translation initiation factor IF-3 (204 aa).

The interval 169 to 204 (VPKAAPKRDSGRSESAQEAPTARSAEASRPEAPANA) is disordered.

This sequence belongs to the IF-3 family. Monomer.

The protein localises to the cytoplasm. IF-3 binds to the 30S ribosomal subunit and shifts the equilibrium between 70S ribosomes and their 50S and 30S subunits in favor of the free subunits, thus enhancing the availability of 30S subunits on which protein synthesis initiation begins. The sequence is that of Translation initiation factor IF-3 from Deinococcus geothermalis (strain DSM 11300 / CIP 105573 / AG-3a).